The chain runs to 323 residues: Fructose-1,6-bisphosphatase class 1 (323 aa).

Residues Glu-88, Asp-107, Leu-109, and Asp-110 each contribute to the Mg(2+) site. Substrate-binding positions include 110–113 and Asn-200; that span reads DGSS. Position 272 (Glu-272) interacts with Mg(2+).

Belongs to the FBPase class 1 family. Homotetramer. Mg(2+) is required as a cofactor.

The protein resides in the cytoplasm. It carries out the reaction beta-D-fructose 1,6-bisphosphate + H2O = beta-D-fructose 6-phosphate + phosphate. Its pathway is carbohydrate biosynthesis; gluconeogenesis. In Acinetobacter baumannii (strain AYE), this protein is Fructose-1,6-bisphosphatase class 1.